The primary structure comprises 548 residues: Organic cation transporter protein (548 aa).

The Cytoplasmic segment spans residues 1-22; the sequence is MGYDDVITHLGEFGPYQKRIYY. The helical transmembrane segment at 23–43 threads the bilayer; sequence LLCLPAIVCAFHKLAGVFLLA. Over 44-127 the chain is Extracellular; it reads KPDFRCALPY…TEWNLVCSRS (84 aa). 4 N-linked (GlcNAc...) asparagine glycosylation sites follow: N55, N67, N89, and N97. Residues 128–148 traverse the membrane as a helical segment; the sequence is LLSATSDSLFMLGVLLGSLIF. The Cytoplasmic segment spans residues 149–158; the sequence is GQMSDKLGRK. The chain crosses the membrane as a helical span at residues 159–179; it reads PTFFASLVLQLIFGVLAAVAP. Residues 180–189 lie on the Extracellular side of the membrane; it reads EYFSYTISRM. The chain crosses the membrane as a helical span at residues 190–210; it reads IVGATTSGVFLVAYVIALEMV. The Cytoplasmic segment spans residues 211 to 219; the sequence is GSSYRLFAG. The helical transmembrane segment at 220–240 threads the bilayer; that stretch reads VAMQMFFSVGFMLTAGFAYFI. Topologically, residues 241–244 are extracellular; sequence HDWR. Residues 245–265 form a helical membrane-spanning segment; that stretch reads WLQIAITLPGLLFLCYYWIIP. At 266 to 337 the chain is on the cytoplasmic side; it reads ESARWLLMKG…LLRYPNLRRK (72 aa). Residues 338-358 traverse the membrane as a helical segment; it reads TLLIFFDWFVNSGVYYGLSWN. At 359 to 366 the chain is on the extracellular side; the sequence is TNNLGGNQ. The helical transmembrane segment at 367 to 387 threads the bilayer; the sequence is LVNFMISGAVEIPGYTLLLFT. Topologically, residues 388–395 are cytoplasmic; it reads LNRWGRRS. A helical membrane pass occupies residues 396 to 416; the sequence is ILCGTMMVAGISLLATIFVPS. Residues 417-419 are Extracellular-facing; sequence DMN. Residues 420 to 440 traverse the membrane as a helical segment; sequence WLIVACAMIGKLAITSSYGTI. Over 441 to 453 the chain is Cytoplasmic; the sequence is YIFSAEQFPTVVR. A helical membrane pass occupies residues 454–474; the sequence is NVGLGASSMVARVGGILAPYL. The Extracellular portion of the chain corresponds to 475-482; it reads KLLGEIWR. A helical membrane pass occupies residues 483-503; it reads PLPLIICGALSLTAGLLSLLL. The Cytoplasmic portion of the chain corresponds to 504 to 548; sequence PETLNKPMPETIEDGENFGKKPAPQETAEEGGTQELSGMLNGKSG. The segment at 512-548 is disordered; it reads PETIEDGENFGKKPAPQETAEEGGTQELSGMLNGKSG.

This sequence belongs to the major facilitator (TC 2.A.1) superfamily. Organic cation transporter (TC 2.A.1.19) family. Expressed in embryos and adults at low level. Expressed at higher level in third instar larvae.

It is found in the membrane. Functionally, probably transports organic cations. This Drosophila melanogaster (Fruit fly) protein is Organic cation transporter protein (Orct).